Here is a 250-residue protein sequence, read N- to C-terminus: 5'-nucleotidase SurE (250 aa).

Positions 8, 9, 39, and 95 each coordinate a divalent metal cation.

The protein belongs to the SurE nucleotidase family. A divalent metal cation is required as a cofactor.

It is found in the cytoplasm. It catalyses the reaction a ribonucleoside 5'-phosphate + H2O = a ribonucleoside + phosphate. Its function is as follows. Nucleotidase that shows phosphatase activity on nucleoside 5'-monophosphates. The chain is 5'-nucleotidase SurE from Cupriavidus pinatubonensis (strain JMP 134 / LMG 1197) (Cupriavidus necator (strain JMP 134)).